The primary structure comprises 256 residues: MTDPRKGDHAEPTTHFGYQDVPESQKAKKVAEVFHSVAAKYDLMNDVLSGGMHRLWKRFTIELSGVRSGNRVLDIAGGTGDLAAKFSRLVGPTGQVVLADINESMLKVGRDRLLDRGVAGNIEFVQADAEKLPFPDNHFDCVTIAFGLRNVTHKDEAIRSMLRVLKPGGRLLVLEFSKPTNKLMSKAYDAYSFAFMPLAGKLITNDSESYRYLAESIRMHPDQETLKAMMVEAGFDRVTYHNMTSGIVAVHRGIKP.

The segment covering 1-12 (MTDPRKGDHAEP) has biased composition (basic and acidic residues). The segment at 1–21 (MTDPRKGDHAEPTTHFGYQDV) is disordered. Residues Thr79, Asp100, and 128 to 129 (DA) each bind S-adenosyl-L-methionine.

It belongs to the class I-like SAM-binding methyltransferase superfamily. MenG/UbiE family.

It catalyses the reaction a 2-demethylmenaquinol + S-adenosyl-L-methionine = a menaquinol + S-adenosyl-L-homocysteine + H(+). The catalysed reaction is a 2-methoxy-6-(all-trans-polyprenyl)benzene-1,4-diol + S-adenosyl-L-methionine = a 5-methoxy-2-methyl-3-(all-trans-polyprenyl)benzene-1,4-diol + S-adenosyl-L-homocysteine + H(+). The protein operates within quinol/quinone metabolism; menaquinone biosynthesis; menaquinol from 1,4-dihydroxy-2-naphthoate: step 2/2. It participates in cofactor biosynthesis; ubiquinone biosynthesis. Functionally, methyltransferase required for the conversion of demethylmenaquinol (DMKH2) to menaquinol (MKH2) and the conversion of 2-polyprenyl-6-methoxy-1,4-benzoquinol (DDMQH2) to 2-polyprenyl-3-methyl-6-methoxy-1,4-benzoquinol (DMQH2). This chain is Ubiquinone/menaquinone biosynthesis C-methyltransferase UbiE, found in Pseudomonas entomophila (strain L48).